The chain runs to 335 residues: Urokinase plasminogen activator surface receptor (335 aa).

The first 22 residues, 1 to 22, serve as a signal peptide directing secretion; it reads MGHPPLLPLLLLLHTCVPASWG. 3 UPAR/Ly6 domains span residues 23–114, 115–213, and 214–305; these read LRCM…RSRY, LECI…PQNG, and RQCY…YRSG. 3 cysteine pairs are disulfide-bonded: Cys-25–Cys-46, Cys-28–Cys-34, and Cys-39–Cys-67. An N-linked (GlcNAc...) asparagine glycan is attached at Asn-74. 11 disulfides stabilise this stretch: Cys-93-Cys-98, Cys-117-Cys-144, Cys-120-Cys-127, Cys-137-Cys-169, Cys-175-Cys-192, Cys-193-Cys-198, Cys-216-Cys-244, Cys-219-Cys-227, Cys-237-Cys-263, Cys-269-Cys-287, and Cys-288-Cys-293. Residue Asn-124 is glycosylated (N-linked (GlcNAc...) asparagine). N-linked (GlcNAc...) asparagine glycosylation is found at Asn-184, Asn-194, Asn-222, and Asn-255. A lipid anchor (GPI-anchor amidated glycine) is attached at Gly-305. Positions 306–335 are cleaved as a propeptide — removed in mature form; that stretch reads AAPQPGPAHLSLTITLLMTARLWGGTLLWT.

As to quaternary structure, monomer. Interacts (via the UPAR/Ly6 domains) with SRPX2. Interacts with MRC2. Interacts with FAP (seprase); the interaction occurs at the cell surface of invadopodia membrane. Interacts with SORL1 (via N-terminal ectodomain); this interaction decreases PLAUR internalization. The ternary complex composed of PLAUR-PLAU-SERPINE1 also interacts with SORL1. Interacts with CD82; this interaction prevents PLAUR from binding to its high affinity ligand PLAU.

It localises to the cell membrane. The protein localises to the cell projection. Its subcellular location is the invadopodium membrane. Acts as a receptor for urokinase plasminogen activator. Plays a role in localizing and promoting plasmin formation. Mediates the proteolysis-independent signal transduction activation effects of U-PA. It is subject to negative-feedback regulation by U-PA which cleaves it into an inactive form. The sequence is that of Urokinase plasminogen activator surface receptor (PLAUR) from Pan troglodytes (Chimpanzee).